The following is a 296-amino-acid chain: Phosphatidylglycerol--prolipoprotein diacylglyceryl transferase (296 aa).

The next 3 helical transmembrane spans lie at 17–37 (LAVRWYGLMYLVGFIAAIVVG), 59–79 (MMFYGVLGTVLGGRLGYVLFY), and 97–117 (GGMSFHGGFLGVTLAMMLFAW). Arg-142 provides a ligand contact to a 1,2-diacyl-sn-glycero-3-phospho-(1'-sn-glycerol). 2 helical membrane-spanning segments follow: residues 230–250 (MGAVSALFLIGYGLARFTVEF) and 257–277 (FLGLLALGLSMGQWLSLPMIL).

Belongs to the Lgt family.

The protein resides in the cell inner membrane. The catalysed reaction is L-cysteinyl-[prolipoprotein] + a 1,2-diacyl-sn-glycero-3-phospho-(1'-sn-glycerol) = an S-1,2-diacyl-sn-glyceryl-L-cysteinyl-[prolipoprotein] + sn-glycerol 1-phosphate + H(+). It participates in protein modification; lipoprotein biosynthesis (diacylglyceryl transfer). In terms of biological role, catalyzes the transfer of the diacylglyceryl group from phosphatidylglycerol to the sulfhydryl group of the N-terminal cysteine of a prolipoprotein, the first step in the formation of mature lipoproteins. This is Phosphatidylglycerol--prolipoprotein diacylglyceryl transferase from Burkholderia lata (strain ATCC 17760 / DSM 23089 / LMG 22485 / NCIMB 9086 / R18194 / 383).